A 358-amino-acid chain; its full sequence is Protein ocs (358 aa).

The protein belongs to the lysopine/nopaline/octopine/opine/vitopine dehydrogenases family. Monomer.

The enzyme catalyses D-octopine + NAD(+) + H2O = L-arginine + pyruvate + NADH + H(+). The catalysed reaction is D-lysopine + NADP(+) + H2O = L-lysine + pyruvate + NADPH + H(+). Its function is as follows. Reductive condensation of pyruvate and arginine, lysine, histidine, or octopine to form octopine, lysopine, histopine, or octopinic acid, respectively. NADPH is the preferred cofactor, but NADH can also be used. The chain is Protein ocs (ocs) from Agrobacterium tumefaciens (strain Ach5).